We begin with the raw amino-acid sequence, 305 residues long: Secreted mono- and diacylglycerol lipase A (305 aa).

The N-terminal stretch at Met1–Arg26 is a signal peptide. 2 cysteine pairs are disulfide-bonded: Cys62–Cys67 and Cys129–Cys132. Ser171 acts as the Nucleophile in catalysis. Asp225 serves as the catalytic Charge relay system. Residue Asn251 is glycosylated (N-linked (GlcNAc...) asparagine). Residue His285 is the Charge relay system of the active site. Residues Lys303 to Val305 constitute a propeptide, removed in mature form.

It belongs to the AB hydrolase superfamily. Lipase family. Class 3 subfamily. Post-translationally, multiple forms of this lipase are due to the presence of different carbohydrates, which may contribute to the stability of this lipase but not to the enzyme activity.

It is found in the secreted. The catalysed reaction is a monoacylglycerol + H2O = glycerol + a fatty acid + H(+). It carries out the reaction a diacylglycerol + H2O = a monoacylglycerol + a fatty acid + H(+). Both Fe(3+) and Hg(2+) inhibit the activity significantly. In terms of biological role, secreted lipase strictly specific to mono- and diacylglycerol, but not triacylglycerol. Hydrolyzes long-chain monoacylglycerols most efficiently with the highest activities observed on 1- and 3- monopalmitoyl-sn-glycerol or 1-monostearoyl-rac-glycerol. Prefers to attack alpha positions to beta positions of monoacylglycerol, but shows no stereospecificity on mono- and diacylglycerol. This Penicillium camembertii protein is Secreted mono- and diacylglycerol lipase A.